Reading from the N-terminus, the 227-residue chain is Small ribosomal subunit protein uS3 (227 aa).

The region spanning 39–107 (VRQLLQKRLK…PVHITIEEVR (69 aa)) is the KH type-2 domain.

Belongs to the universal ribosomal protein uS3 family. In terms of assembly, part of the 30S ribosomal subunit. Forms a tight complex with proteins S10 and S14.

In terms of biological role, binds the lower part of the 30S subunit head. Binds mRNA in the 70S ribosome, positioning it for translation. This chain is Small ribosomal subunit protein uS3 (rpsC), found in Coxiella burnetii (strain RSA 493 / Nine Mile phase I).